The chain runs to 276 residues: Pantothenate synthetase (276 aa).

26 to 33 (MGFLHEGH) lines the ATP pocket. Catalysis depends on H33, which acts as the Proton donor. Q57 serves as a coordination point for (R)-pantoate. Q57 is a beta-alanine binding site. 142–145 (GLKD) lines the ATP pocket. Residue Q148 coordinates (R)-pantoate. ATP contacts are provided by residues I171 and 179-182 (KSSR).

Belongs to the pantothenate synthetase family. As to quaternary structure, homodimer.

The protein resides in the cytoplasm. The enzyme catalyses (R)-pantoate + beta-alanine + ATP = (R)-pantothenate + AMP + diphosphate + H(+). Its pathway is cofactor biosynthesis; (R)-pantothenate biosynthesis; (R)-pantothenate from (R)-pantoate and beta-alanine: step 1/1. Catalyzes the condensation of pantoate with beta-alanine in an ATP-dependent reaction via a pantoyl-adenylate intermediate. This chain is Pantothenate synthetase, found in Exiguobacterium sibiricum (strain DSM 17290 / CCUG 55495 / CIP 109462 / JCM 13490 / 255-15).